The sequence spans 355 residues: Alanine racemase (355 aa).

Residue Lys37 is the Proton acceptor; specific for D-alanine of the active site. Lys37 is modified (N6-(pyridoxal phosphate)lysine). Arg129 is a binding site for substrate. Residue Tyr251 is the Proton acceptor; specific for L-alanine of the active site. Met299 lines the substrate pocket.

The protein belongs to the alanine racemase family. Pyridoxal 5'-phosphate serves as cofactor.

The catalysed reaction is L-alanine = D-alanine. Its pathway is amino-acid biosynthesis; D-alanine biosynthesis; D-alanine from L-alanine: step 1/1. Catalyzes the interconversion of L-alanine and D-alanine. May also act on other amino acids. This chain is Alanine racemase (alr), found in Deinococcus geothermalis (strain DSM 11300 / CIP 105573 / AG-3a).